Consider the following 363-residue polypeptide: Fructose-bisphosphate aldolase C (363 aa).

Arg56 and Lys147 together coordinate substrate. Residue Lys230 is the Schiff-base intermediate with dihydroxyacetone-P of the active site.

It belongs to the class I fructose-bisphosphate aldolase family. In terms of assembly, homotetramer. As to expression, expressed in brain but not in liver or muscle.

The enzyme catalyses beta-D-fructose 1,6-bisphosphate = D-glyceraldehyde 3-phosphate + dihydroxyacetone phosphate. Its pathway is carbohydrate degradation; glycolysis; D-glyceraldehyde 3-phosphate and glycerone phosphate from D-glucose: step 4/4. The protein is Fructose-bisphosphate aldolase C (aldoc) of Carassius auratus (Goldfish).